The sequence spans 29 residues: Sarcolamban B (29 aa).

A helical transmembrane segment spans residues 7 to 27 (LFTTFLILAFLLFLLYAFYEA).

As to quaternary structure, interacts with SERCA. In terms of tissue distribution, strongly expressed in embryonic and larval somatic muscles and postembryonic heart.

The protein resides in the sarcoplasmic reticulum membrane. Its function is as follows. Plays an essential role in the regulation of calcium transport at the sarcoplasmic reticulum (SR), which is secondarily required for regular muscle contraction. This chain is Sarcolamban B, found in Drosophila melanogaster (Fruit fly).